The sequence spans 121 residues: Basic phospholipase A2 VRV-PL-VIIIa (121 aa).

Disulfide bonds link C26–C115, C28–C44, C43–C95, C49–C121, C50–C88, C57–C81, and C75–C86. Residues Y27, G29, and G31 each contribute to the Ca(2+) site. Residue H47 is part of the active site. D48 contributes to the Ca(2+) binding site. D89 is a catalytic residue.

The protein belongs to the phospholipase A2 family. Group II subfamily. D49 sub-subfamily. As to quaternary structure, monomer. Ca(2+) serves as cofactor. Expressed by the venom gland.

It is found in the secreted. It catalyses the reaction a 1,2-diacyl-sn-glycero-3-phosphocholine + H2O = a 1-acyl-sn-glycero-3-phosphocholine + a fatty acid + H(+). With respect to regulation, oxyphenbutazone (OPB), anisic acid and atropine inhibit the enzymatic activity by binding at the substrate-binding site. P-coumaric acid, resveratrol, spermidine, corticosterone and gramine derivative inhibit the enzymatic activity by binding at the substrate-binding site. In terms of biological role, snake venom phospholipase A2 (PLA2) that shows weak neurotoxicity and medium anticoagulant effects by binding to factor Xa (F10) and inhibiting the prothrombinase activity (IC(50) is 130 nM). It also damages vital organs such as lung, liver and kidney, displays edema-inducing activities when injected into the foot pads of mice and induces necrosis of muscle cells when injected into the thigh muscle. Has a low enzymatic activity. PLA2 catalyzes the calcium-dependent hydrolysis of the 2-acyl groups in 3-sn-phosphoglycerides. This Daboia russelii (Russel's viper) protein is Basic phospholipase A2 VRV-PL-VIIIa.